The following is a 260-amino-acid chain: Acetyl-coenzyme A carboxylase carboxyl transferase subunit alpha (260 aa).

Positions 1–235 constitute a CoA carboxyltransferase C-terminal domain; the sequence is MSAYDKVMAA…SNKILHSINK (235 aa).

Belongs to the AccA family. In terms of assembly, acetyl-CoA carboxylase is a heterohexamer composed of biotin carboxyl carrier protein (AccB), biotin carboxylase (AccC) and two subunits each of ACCase subunit alpha (AccA) and ACCase subunit beta (AccD).

It localises to the cytoplasm. The enzyme catalyses N(6)-carboxybiotinyl-L-lysyl-[protein] + acetyl-CoA = N(6)-biotinyl-L-lysyl-[protein] + malonyl-CoA. Its pathway is lipid metabolism; malonyl-CoA biosynthesis; malonyl-CoA from acetyl-CoA: step 1/1. Its function is as follows. Component of the acetyl coenzyme A carboxylase (ACC) complex. First, biotin carboxylase catalyzes the carboxylation of biotin on its carrier protein (BCCP) and then the CO(2) group is transferred by the carboxyltransferase to acetyl-CoA to form malonyl-CoA. The polypeptide is Acetyl-coenzyme A carboxylase carboxyl transferase subunit alpha (Ruminiclostridium cellulolyticum (strain ATCC 35319 / DSM 5812 / JCM 6584 / H10) (Clostridium cellulolyticum)).